The sequence spans 474 residues: Magnesium transporter MRS2-A, chloroplastic (474 aa).

Residues 1 to 55 (MASVSSSPSYSSQAAVLLLLHQPPHQHGHGGACLRYRGSQSQGRGNAVATSLGLS) constitute a chloroplast transit peptide. Residues 79–129 (GKDGRAVTKDEEEEAAAAAVEEEGEVEVRREEDKPGDDGSREAAARGSGSG) are disordered. A compositionally biased stretch (acidic residues) spans 88-103 (DEEEEAAAAAVEEEGE). Basic and acidic residues predominate over residues 104–122 (VEVRREEDKPGDDGSREAA). 2 helical membrane-spanning segments follow: residues 412–432 (LLLQVGTFCVAIGALIAGIFG) and 444–464 (WAFWATTGGIVVGAVAGFFIM). The Required for magnesium transport activity signature appears at 432–434 (GMN).

This sequence belongs to the CorA metal ion transporter (MIT) (TC 1.A.35.5) family.

It is found in the plastid. The protein localises to the chloroplast membrane. In terms of biological role, magnesium transporter that may mediate the influx of magnesium in chloroplast. This is Magnesium transporter MRS2-A, chloroplastic (MRS2-A) from Oryza sativa subsp. japonica (Rice).